Here is a 329-residue protein sequence, read N- to C-terminus: 4-methyl-2-oxopentanoate reductase A (329 aa).

NAD(+) is bound by residues 162-163 (GI), 240-242 (TAR), and D266. R242 is an active-site residue. E271 is a catalytic residue. Residue H289 is the Proton donor of the active site.

It belongs to the D-isomer specific 2-hydroxyacid dehydrogenase family.

The catalysed reaction is (2R)-hydroxy-4-methylpentanoate + NADP(+) = 4-methyl-2-oxopentanoate + NADPH + H(+). The enzyme catalyses a (2R)-2-hydroxycarboxylate + NADP(+) = a 2-oxocarboxylate + NADPH + H(+). In terms of biological role, 4-methyl-2-oxopentanoate (MOA) reductase that reduces MOA, a possible intermediate in leucine synthesis, to D-leucate in a NADPH- or NADH-dependent manner, but with a preference for NADPH. In addition to MOA, shows broad substrate specificity toward 2-keto acids. The chain is 4-methyl-2-oxopentanoate reductase A from Aspergillus oryzae (strain ATCC 42149 / RIB 40) (Yellow koji mold).